The chain runs to 37 residues: Large ribosomal subunit protein bL36 (37 aa).

Belongs to the bacterial ribosomal protein bL36 family.

In Thermobifida fusca (strain YX), this protein is Large ribosomal subunit protein bL36.